Consider the following 445-residue polypeptide: Chromosomal replication initiator protein DnaA (445 aa).

The domain I, interacts with DnaA modulators stretch occupies residues 1-73 (MSPNSTLWQT…NELATKYSST (73 aa)). The interval 73-102 (TPVRLKFVSQEEVIEEPVADRKLTIDYRQG) is domain II. Residues 103 to 323 (NLNSTYTFDS…GALIRLISYA (221 aa)) are domain III, AAA+ region. 4 residues coordinate ATP: G147, G149, K150, and T151. The interval 324-445 (QTFNLEITMN…KFAVDSIVKK (122 aa)) is domain IV, binds dsDNA.

It belongs to the DnaA family. In terms of assembly, oligomerizes as a right-handed, spiral filament on DNA at oriC.

The protein resides in the cytoplasm. Its function is as follows. Plays an essential role in the initiation and regulation of chromosomal replication. ATP-DnaA binds to the origin of replication (oriC) to initiate formation of the DNA replication initiation complex once per cell cycle. Binds the DnaA box (a 9 base pair repeat at the origin) and separates the double-stranded (ds)DNA. Forms a right-handed helical filament on oriC DNA; dsDNA binds to the exterior of the filament while single-stranded (ss)DNA is stabiized in the filament's interior. The ATP-DnaA-oriC complex binds and stabilizes one strand of the AT-rich DNA unwinding element (DUE), permitting loading of DNA polymerase. After initiation quickly degrades to an ADP-DnaA complex that is not apt for DNA replication. Binds acidic phospholipids. The sequence is that of Chromosomal replication initiator protein DnaA from Acholeplasma laidlawii.